Here is a 599-residue protein sequence, read N- to C-terminus: Elongation factor 4 (599 aa).

The tr-type G domain maps to 5 to 187; it reads SHIRNFSIIA…RLVHTIPAPV (183 aa). Residues 17–22 and 134–137 each bind GTP; these read DHGKST and NKMD.

Belongs to the TRAFAC class translation factor GTPase superfamily. Classic translation factor GTPase family. LepA subfamily.

Its subcellular location is the cell inner membrane. It catalyses the reaction GTP + H2O = GDP + phosphate + H(+). Functionally, required for accurate and efficient protein synthesis under certain stress conditions. May act as a fidelity factor of the translation reaction, by catalyzing a one-codon backward translocation of tRNAs on improperly translocated ribosomes. Back-translocation proceeds from a post-translocation (POST) complex to a pre-translocation (PRE) complex, thus giving elongation factor G a second chance to translocate the tRNAs correctly. Binds to ribosomes in a GTP-dependent manner. The protein is Elongation factor 4 of Pseudomonas putida (strain W619).